Consider the following 439-residue polypeptide: Structure-specific endonuclease subunit SLX1 homolog (439 aa).

2 disordered regions span residues Met1–Lys28 and Asp117–Leu140. A compositionally biased stretch (basic and acidic residues) spans Glu125 to Asn136. Residues Glu166 to Lys253 enclose the GIY-YIG domain. The SLX1-type zinc-finger motif lies at Cys335–Cys390.

The protein belongs to the SLX1 family. As to quaternary structure, forms a heterodimer with him-18/slx-4. A divalent metal cation serves as cofactor.

It is found in the nucleus. Its function is as follows. Catalytic subunit of a heterodimeric structure-specific endonuclease that resolves DNA secondary structures generated during DNA repair and recombination. Has endonuclease activity towards branched DNA substrates, introducing single-strand cuts in duplex DNA close to junctions with ss-DNA (Potential). Has a preference for replication forks over 5' flap structures or Holliday junctions and shows much lower activity toward 3' flap structures. Required for proper crossover distribution through inhibition of crossover formation at the central region of chromosomes. In Caenorhabditis briggsae, this protein is Structure-specific endonuclease subunit SLX1 homolog.